Consider the following 437-residue polypeptide: Ribosomal protein uS12 methylthiotransferase RimO (437 aa).

An MTTase N-terminal domain is found at 5-116 (PTIAISHLGC…IVEIVERVET (112 aa)). Cys-14, Cys-50, Cys-79, Cys-154, Cys-158, and Cys-161 together coordinate [4Fe-4S] cluster. The 230-residue stretch at 140-369 (TTSEGVAYLR…MLTQQPISER (230 aa)) folds into the Radical SAM core domain. The TRAM domain maps to 372 to 437 (QAYIGQTVDV…DTYDLYGEIV (66 aa)).

It belongs to the methylthiotransferase family. RimO subfamily. [4Fe-4S] cluster serves as cofactor.

Its subcellular location is the cytoplasm. The catalysed reaction is L-aspartate(89)-[ribosomal protein uS12]-hydrogen + (sulfur carrier)-SH + AH2 + 2 S-adenosyl-L-methionine = 3-methylsulfanyl-L-aspartate(89)-[ribosomal protein uS12]-hydrogen + (sulfur carrier)-H + 5'-deoxyadenosine + L-methionine + A + S-adenosyl-L-homocysteine + 2 H(+). Catalyzes the methylthiolation of an aspartic acid residue of ribosomal protein uS12. The sequence is that of Ribosomal protein uS12 methylthiotransferase RimO from Microcystis aeruginosa (strain NIES-843 / IAM M-2473).